The primary structure comprises 239 residues: Protein GrpE (239 aa).

Disordered stretches follow at residues 1–60 (MIEN…SNND) and 208–239 (SMGPGKQKSQQEVEKDTVEGDVDSDANTSEDV). A compositionally biased stretch (polar residues) spans 28-42 (SMQNSTTENDELSSQ). Basic and acidic residues-rich tracts occupy residues 43–53 (KTEEINTEELK) and 216–225 (SQQEVEKDTV). Residues 226–239 (EGDVDSDANTSEDV) show a composition bias toward acidic residues.

It belongs to the GrpE family. In terms of assembly, homodimer.

The protein resides in the cytoplasm. Participates actively in the response to hyperosmotic and heat shock by preventing the aggregation of stress-denatured proteins, in association with DnaK and GrpE. It is the nucleotide exchange factor for DnaK and may function as a thermosensor. Unfolded proteins bind initially to DnaJ; upon interaction with the DnaJ-bound protein, DnaK hydrolyzes its bound ATP, resulting in the formation of a stable complex. GrpE releases ADP from DnaK; ATP binding to DnaK triggers the release of the substrate protein, thus completing the reaction cycle. Several rounds of ATP-dependent interactions between DnaJ, DnaK and GrpE are required for fully efficient folding. The sequence is that of Protein GrpE from Prochlorococcus marinus (strain MIT 9301).